We begin with the raw amino-acid sequence, 188 residues long: Fructose-1-phosphate phosphatase YqaB (188 aa).

D11 serves as the catalytic Nucleophile. Mg(2+) contacts are provided by D11, D13, and D167. Substrate is bound at residue 11–13 (DMD).

It belongs to the HAD-like hydrolase superfamily. CbbY/CbbZ/Gph/YieH family. Requires Mg(2+) as cofactor. Mn(2+) serves as cofactor. Co(2+) is required as a cofactor. The cofactor is Zn(2+).

Its function is as follows. Catalyzes strongly the dephosphorylation of fructose-1-phosphate (Fru1P) and slightly the dephosphorylation of 6-phosphogluconate (6P-Glu). It has low beta-phosphoglucomutase activity. In Escherichia coli (strain K12), this protein is Fructose-1-phosphate phosphatase YqaB (yqaB).